The primary structure comprises 102 residues: Urease subunit beta (102 aa).

This sequence belongs to the urease beta subunit family. In terms of assembly, heterotrimer of UreA (gamma), UreB (beta) and UreC (alpha) subunits. Three heterotrimers associate to form the active enzyme.

Its subcellular location is the cytoplasm. It carries out the reaction urea + 2 H2O + H(+) = hydrogencarbonate + 2 NH4(+). Its pathway is nitrogen metabolism; urea degradation; CO(2) and NH(3) from urea (urease route): step 1/1. The protein is Urease subunit beta of Bordetella parapertussis (strain 12822 / ATCC BAA-587 / NCTC 13253).